We begin with the raw amino-acid sequence, 21 residues long: 78 kDa dihydrolipoyllysine-residue acetyltransferase component of pyruvate dehydrogenase complex (21 aa).

Belongs to the 2-oxoacid dehydrogenase family. In terms of assembly, forms a 60-polypeptide structural core. Requires (R)-lipoate as cofactor.

It localises to the mitochondrion matrix. It carries out the reaction N(6)-[(R)-dihydrolipoyl]-L-lysyl-[protein] + acetyl-CoA = N(6)-[(R)-S(8)-acetyldihydrolipoyl]-L-lysyl-[protein] + CoA. Its function is as follows. The pyruvate dehydrogenase complex catalyzes the overall conversion of pyruvate to acetyl-CoA and CO(2). It contains multiple copies of three enzymatic components: pyruvate dehydrogenase (E1), dihydrolipoamide acetyltransferase (E2) and lipoamide dehydrogenase (E3). The polypeptide is 78 kDa dihydrolipoyllysine-residue acetyltransferase component of pyruvate dehydrogenase complex (Solanum tuberosum (Potato)).